The primary structure comprises 314 residues: Zinc-binding alcohol dehydrogenase domain-containing protein cipB (314 aa).

The protein belongs to the zinc-containing alcohol dehydrogenase family.

In terms of biological role, involved in osmoadaptation. This Emericella nidulans (strain FGSC A4 / ATCC 38163 / CBS 112.46 / NRRL 194 / M139) (Aspergillus nidulans) protein is Zinc-binding alcohol dehydrogenase domain-containing protein cipB (cipB).